A 505-amino-acid polypeptide reads, in one-letter code: Trans-cinnamate 4-monooxygenase C4H2 (505 aa).

Short sequence motifs (nuclear localization signal) lie at residues 161–168 and 247–254; these read VKKMKESN and EKRLKLFK. C447 contributes to the heme binding site.

Belongs to the cytochrome P450 family. It depends on heme as a cofactor.

It is found in the nucleus. The catalysed reaction is (E)-cinnamate + reduced [NADPH--hemoprotein reductase] + O2 = (E)-4-coumarate + oxidized [NADPH--hemoprotein reductase] + H2O + H(+). Its pathway is phenylpropanoid metabolism; trans-4-coumarate biosynthesis; trans-4-coumarate from trans-cinnamate: step 1/1. Functionally, component of the floral volatile benzenoid/phenylpropanoid (FVBP) biosynthetic pathway that controls carbon flux to pigments essential for pollination or UV protection, to numerous pytoalexins synthesized by plants when challenged by pathogens, and to lignins. The chain is Trans-cinnamate 4-monooxygenase C4H2 from Petunia hybrida (Petunia).